The sequence spans 533 residues: Adenylate kinase 7 (533 aa).

The tract at residues 177–426 (PVKICILGPP…EPRNYGLTDE (250 aa)) is adenylate kinase. Residue 187–192 (AVGKSS) participates in ATP binding. The segment at 207–265 (QLKDVISEAIAKLETIVAPKDIGEGKEEVEEEEEEENVEDAQELLDGIKESMEQNAGQL) is NMP. AMP is bound by residues 242-265 (ENVEDAQELLDGIKESMEQNAGQL), 292-295 (GFPK), and Q299. Residues 347 to 357 (NLPERIVAGTH) form an LID region. R365 serves as a coordination point for AMP. Residue G397 coordinates ATP. Residues 419 to 487 (RNYGLTDEEK…EERELLEAQS (69 aa)) are a coiled coil. Residues 489-533 (PLRNYLMTYVMPTLIQGLNECCNVRPEDPVDFLAEYLFKNNPEAQ) are DPY-30.

The protein in the central section; belongs to the adenylate kinase family. In the C-terminal section; belongs to the dpy-30 family.

It is found in the cytoplasm. The protein localises to the cytosol. Its subcellular location is the cell projection. The protein resides in the cilium. It localises to the flagellum. The catalysed reaction is AMP + ATP = 2 ADP. It carries out the reaction a 2'-deoxyribonucleoside 5'-diphosphate + ATP = a 2'-deoxyribonucleoside 5'-triphosphate + ADP. It catalyses the reaction a ribonucleoside 5'-diphosphate + ATP = a ribonucleoside 5'-triphosphate + ADP. Its function is as follows. Nucleoside monophosphate (NMP) kinase that catalyzes the reversible transfer of the terminal phosphate group between nucleoside triphosphates and monophosphates. Has highest activity toward AMP, and weaker activity toward dAMP, CMP and dCMP. Also displays broad nucleoside diphosphate kinase activity. Involved in maintaining ciliary structure and function. In Macaca fascicularis (Crab-eating macaque), this protein is Adenylate kinase 7 (AK7).